Here is a 561-residue protein sequence, read N- to C-terminus: Bifunctional NAD(P)H-hydrate repair enzyme (561 aa).

The NAD(P)H-hydrate epimerase stretch occupies residues 1 to 241 (MLSRISERCT…WMIAAERMDA (241 aa)). The region spanning 29–235 (LRDAEPAAAA…SLGLEEWMIA (207 aa)) is the YjeF N-terminal domain. An NADPHX 1; for epimerase activity region spans residues 77–81 (NNGGD). K(+)-binding residues include N78 and D145. Residues 149-155 (GTGISGP) form an NADPHX 1; for epimerase activity region. (6S)-NADPHX contacts are provided by Y160 and D178. Residue S181 coordinates K(+). A YjeF C-terminal domain is found at 249–548 (LGDVYGYFST…PRIPFIVNAS (300 aa)). The ADP-dependent (S)-NAD(P)H-hydrate dehydratase stretch occupies residues 249 to 561 (LGDVYGYFST…SATQQRPSGL (313 aa)). G351 contacts (6S)-NADPHX. Positions 417-423 (HPGEAAR) are NADPHX 2; for dehydratase activity. ADP is bound by residues 454-458 (KGPGT) and 475-484 (NAGMASGGMG). Residue D485 participates in (6S)-NADPHX binding.

It in the N-terminal section; belongs to the NnrE/AIBP family. In the C-terminal section; belongs to the NnrD/CARKD family. The cofactor is K(+).

It carries out the reaction (6S)-NADHX + ADP = AMP + phosphate + NADH + H(+). The enzyme catalyses (6S)-NADPHX + ADP = AMP + phosphate + NADPH + H(+). The catalysed reaction is (6R)-NADHX = (6S)-NADHX. It catalyses the reaction (6R)-NADPHX = (6S)-NADPHX. Bifunctional enzyme that catalyzes the epimerization of the S- and R-forms of NAD(P)HX and the dehydration of the S-form of NAD(P)HX at the expense of ADP, which is converted to AMP. This allows the repair of both epimers of NAD(P)HX, a damaged form of NAD(P)H that is a result of enzymatic or heat-dependent hydration. The chain is Bifunctional NAD(P)H-hydrate repair enzyme from Leishmania braziliensis.